The sequence spans 390 residues: Protein DDI1 homolog (390 aa).

Aspartate 205 is an active-site residue. The interval 322–344 (MHAPRHQDPATTATTASNPAAPV) is disordered. Residues 330-343 (PATTATTASNPAAP) show a composition bias toward low complexity.

The protein belongs to the DDI1 family.

The protein resides in the cytoplasm. With respect to regulation, inhibited by pepstatin, diazoacetyl-DL-norleucine methyl ester (DAN) and nelfinavir. Inhibited by the proteinase inhibitors lopinavir and ritonavir. Its function is as follows. Aspartic protease. The chain is Protein DDI1 homolog from Leishmania major.